Reading from the N-terminus, the 566-residue chain is Mannitol 2-dehydrogenase (566 aa).

Residue 106–117 participates in NAD(+) binding; it reads IVHVGVGGFHRA.

The protein belongs to the mannitol dehydrogenase family. In terms of assembly, monomer.

The catalysed reaction is D-mannitol + NAD(+) = D-fructose + NADH + H(+). In terms of biological role, catalyzes the NAD(H)-dependent interconversion of D-fructose and D-mannitol in the mannitol metabolic pathway. The protein is Mannitol 2-dehydrogenase of Pyrenophora tritici-repentis (strain Pt-1C-BFP) (Wheat tan spot fungus).